Consider the following 154-residue polypeptide: SsrA-binding protein (154 aa).

This sequence belongs to the SmpB family.

Its subcellular location is the cytoplasm. Required for rescue of stalled ribosomes mediated by trans-translation. Binds to transfer-messenger RNA (tmRNA), required for stable association of tmRNA with ribosomes. tmRNA and SmpB together mimic tRNA shape, replacing the anticodon stem-loop with SmpB. tmRNA is encoded by the ssrA gene; the 2 termini fold to resemble tRNA(Ala) and it encodes a 'tag peptide', a short internal open reading frame. During trans-translation Ala-aminoacylated tmRNA acts like a tRNA, entering the A-site of stalled ribosomes, displacing the stalled mRNA. The ribosome then switches to translate the ORF on the tmRNA; the nascent peptide is terminated with the 'tag peptide' encoded by the tmRNA and targeted for degradation. The ribosome is freed to recommence translation, which seems to be the essential function of trans-translation. This Streptococcus thermophilus (strain CNRZ 1066) protein is SsrA-binding protein.